We begin with the raw amino-acid sequence, 591 residues long: Lipoprotein LpqB (591 aa).

The N-terminal stretch at 1–20 (MTLRPSRRAVLSAAAVLLTG) is a signal peptide. Residue Cys21 is the site of N-palmitoyl cysteine attachment. The S-diacylglycerol cysteine moiety is linked to residue Cys21.

Belongs to the LpqB lipoprotein family.

It is found in the cell membrane. This is Lipoprotein LpqB from Cutibacterium acnes (strain DSM 16379 / KPA171202) (Propionibacterium acnes).